We begin with the raw amino-acid sequence, 161 residues long: Negative cofactor 2 complex subunit beta (161 aa).

The Histone-fold domain occupies 11-75; the sequence is SLPKATVQKM…IAAEHIIKAL (65 aa). Over residues 93–107 the composition is skewed to basic and acidic residues; sequence EHKEQQKNREKKSSK. Disordered regions lie at residues 93–116 and 130–161; these read EHKEQQKNREKKSSKFEQSGVSRD and RERFKNQNIAHDNHTTTAIPVPTASETETKEN. Polar residues predominate over residues 135-147; it reads NQNIAHDNHTTTA.

This sequence belongs to the NC2 beta/DR1 family.

The protein localises to the cytoplasm. It is found in the nucleus. The polypeptide is Negative cofactor 2 complex subunit beta (ncb2) (Schizosaccharomyces pombe (strain 972 / ATCC 24843) (Fission yeast)).